The chain runs to 74 residues: Large ribosomal subunit protein bL31 (74 aa).

Residues Cys16, Cys18, Cys37, and Cys40 each contribute to the Zn(2+) site.

The protein belongs to the bacterial ribosomal protein bL31 family. Type A subfamily. In terms of assembly, part of the 50S ribosomal subunit. It depends on Zn(2+) as a cofactor.

Its function is as follows. Binds the 23S rRNA. The sequence is that of Large ribosomal subunit protein bL31 from Koribacter versatilis (strain Ellin345).